A 74-amino-acid chain; its full sequence is uncharacterized protein (74 aa).

Residues 15–32 (FLHALTVTFLSDIFVWLV) traverse the membrane as a helical segment.

The protein localises to the membrane. This is an uncharacterized protein from Saccharomyces cerevisiae (strain ATCC 204508 / S288c) (Baker's yeast).